Consider the following 202-residue polypeptide: AKFELPELPYAYDALEPTIDKETMNIHHTKHHNTYVTKLNGALEGHEDLKNKSLNDLISNLDAVPENIRTAVRNNGGGHANHSLFWKLMSPNGGGKPTGEVADKINDKYGSFEKFQEEFAAAAAGRFGSGWAWLVVNNGEIEIMSTPIQDNPLMEGKKPILGLDVWEHAYYLKYQNKRPDYISAFWNVVNWDEVAAQYSQAA.

H27 is a Mn(2+) binding site. 2 positions are modified to phosphothreonine: T34 and T70. Positions 82, 164, and 168 each coordinate Mn(2+).

Belongs to the iron/manganese superoxide dismutase family. Homodimer; under aerobic conditions. Under anaerobic conditions it is a component of the so-called 'green protein' complex (GPC), which consists of at least two components, SodA and a nucleoside diphosphate kinase (NDK). The cofactor is Mn(2+).

The protein localises to the cytoplasm. It catalyses the reaction 2 superoxide + 2 H(+) = H2O2 + O2. Destroys superoxide anion radicals which are normally produced within the cells and which are toxic to biological systems. Active only in homodimeric state. In Virgibacillus halodenitrificans (Bacillus halodenitrificans), this protein is Superoxide dismutase [Mn] (sodA).